The primary structure comprises 595 residues: Putative terpenoid synthase 16 (595 aa).

The Mg(2+) site is built by Asp-349, Asp-353, Asn-494, and Asp-502. Residues 349-353 carry the DDXXD motif motif; it reads DDTCD.

Belongs to the terpene synthase family. Tpsa subfamily. Mg(2+) serves as cofactor. Mn(2+) is required as a cofactor.

It localises to the cytoplasm. Its pathway is secondary metabolite biosynthesis; terpenoid biosynthesis. This chain is Putative terpenoid synthase 16 (TPS16), found in Arabidopsis thaliana (Mouse-ear cress).